The sequence spans 439 residues: Secreted aspartic protease FUS4 (439 aa).

Positions 1–22 (MLTIATLHVALQVFGAFSPSHA) are cleaved as a signal peptide. The Peptidase A1 domain occupies 49–434 (YLFNVTVGSP…NFEDRSFGLA (386 aa)). Residues Asn-52 and Asn-61 are each glycosylated (N-linked (GlcNAc...) asparagine). The active site involves Asp-67. Residues Asn-101, Asn-107, and Asn-123 are each glycosylated (N-linked (GlcNAc...) asparagine). Asp-296 is an active-site residue. Cys-352 and Cys-390 are oxidised to a cystine.

It belongs to the peptidase A1 family.

It is found in the secreted. Functionally, secreted aspartic protease; part of the gene cluster that mediates the biosynthesis of the mycotoxin fusarin C. Within the cluster, FUS1, FUS2, FUS8 and FUS9 are sufficient for fusarin production. The other FUS cluster members are not essential for fusarin C biosynthesis. This chain is Secreted aspartic protease FUS4, found in Gibberella moniliformis (strain M3125 / FGSC 7600) (Maize ear and stalk rot fungus).